The following is a 239-amino-acid chain: MGRKWANIKEKKAAKDANNSRVYAKFGIEIYVAAKSGDPDPHANQKLRFVIERAKTYNVPKHIIDRAIEKAKGSADEQYSELRYEGFGPNGSMVIVDALTNNVNRTAADVRAAFGKNGGNMGVSGAVSYMFDNTGIIGFAGDDADEILEYLMEKDIDVRDVVEEDGQIIVYTEPEDFHHAQEALKEKGIEEFTVTELEMVPQNEVTLEGDDLGNFEKMLDVLEDLEDVQKVHHNVDLPE.

The protein belongs to the TACO1 family. YeeN subfamily.

Its subcellular location is the cytoplasm. The protein is Probable transcriptional regulatory protein EF_2866 of Enterococcus faecalis (strain ATCC 700802 / V583).